The chain runs to 431 residues: MKILIKNVDVIYTADSNRSIIKNGYIIIQDNKIKEINDMDNLVYQSNDFDDVISGKGKMALPGLVNAHTHSAMTLLRGFADDMPLHKWLQEKIWPFEKTLIPEDIYWGAKLAILEMIKTGTTTFADMYFEMGQVAKVVEEGGLRAVLSQGLIEANDGEEGLNRALKFCLEWNNRADGRILTMLAPHAPYTCSPDFFRRVVDLSQEYNLGIHTHIAETKEEFQQIREKYDCTPLQYLEKTGALKRPVLAAHCIYITEEDMDLMAQKPIGVAYNPQSNMKLGSGIAPVTRMLSKGIKVGIGTDGTSSNNNLDLIEEARSGSFLQKVNDLDSTALPVDTVLKMLTVNGAKILGFDKLGVLKEGYLADIILIGLNESTFYYPHYNNLSNLFYAGSGNDVTTVIVNGRVIMKDREVLTINEEEVYYKIEEIARRKL.

2 residues coordinate Zn(2+): His68 and His70. Substrate contacts are provided by Glu97 and His186. Residue His213 coordinates Zn(2+). Residues Glu216 and Asp301 each coordinate substrate. Asp301 provides a ligand contact to Zn(2+).

The protein belongs to the metallo-dependent hydrolases superfamily. MTA/SAH deaminase family. The cofactor is Zn(2+).

It catalyses the reaction S-adenosyl-L-homocysteine + H2O + H(+) = S-inosyl-L-homocysteine + NH4(+). It carries out the reaction S-methyl-5'-thioadenosine + H2O + H(+) = S-methyl-5'-thioinosine + NH4(+). In terms of biological role, catalyzes the deamination of 5-methylthioadenosine and S-adenosyl-L-homocysteine into 5-methylthioinosine and S-inosyl-L-homocysteine, respectively. Is also able to deaminate adenosine. The sequence is that of 5-methylthioadenosine/S-adenosylhomocysteine deaminase from Halothermothrix orenii (strain H 168 / OCM 544 / DSM 9562).